Consider the following 609-residue polypeptide: CTTNBP2 N-terminal-like protein (609 aa).

Residues 1–10 (MEQNSNSSVA) show a composition bias toward polar residues. The disordered stretch occupies residues 1-29 (MEQNSNSSVADTFAEAPATDADYGTENCS). Coiled coils occupy residues 182 to 264 (RMVN…QKQI) and 303 to 370 (IAEG…QQLG). A disordered region spans residues 556–584 (PPAGARGAPPPIPTKPIVPPKREPSLSRL). Positions 563-574 (APPPIPTKPIVP) are enriched in pro residues. The residue at position 586 (Ser586) is a Phosphoserine.

It localises to the cell projection. It is found in the lamellipodium. Its subcellular location is the cytoplasm. The protein localises to the cytoskeleton. The protein resides in the stress fiber. Functionally, regulates lamellipodial actin dynamics in a Cortactin-dependent manner and is therefore likely involved in controlling actin branch density, actin-retrograde flow rates and lamellipodial protrusion. Functions by slowing the dissociation of Cortactin from Arp2/3 nucleated branches thereby increasing branch nucleation and junction stability. Associates with core striatin-interacting phosphatase and kinase (STRIPAK) complex to form CTTNBP2NL-STRIPAK complexes. STRIPAK complexes have critical roles in protein (de)phosphorylation and are regulators of multiple signaling pathways including Hippo, MAPK, nuclear receptor and cytoskeleton remodeling. Different types of STRIPAK complexes are involved in a variety of biological processes such as cell growth, differentiation, apoptosis, metabolism and immune regulation. The protein is CTTNBP2 N-terminal-like protein of Drosophila melanogaster (Fruit fly).